The sequence spans 277 residues: Phosphate import ATP-binding protein PstB 2 (277 aa).

The ABC transporter domain occupies 31-272; the sequence is IEVPGLSLFY…PAKKQTEDYI (242 aa). 63-70 contacts ATP; that stretch reads GPSGCGKS.

Belongs to the ABC transporter superfamily. Phosphate importer (TC 3.A.1.7) family. The complex is composed of two ATP-binding proteins (PstB), two transmembrane proteins (PstC and PstA) and a solute-binding protein (PstS).

Its subcellular location is the cell inner membrane. The enzyme catalyses phosphate(out) + ATP + H2O = ADP + 2 phosphate(in) + H(+). Functionally, part of the ABC transporter complex PstSACB involved in phosphate import. Responsible for energy coupling to the transport system. This chain is Phosphate import ATP-binding protein PstB 2, found in Pseudomonas syringae pv. tomato (strain ATCC BAA-871 / DC3000).